Here is a 717-residue protein sequence, read N- to C-terminus: Probable metal-nicotianamine transporter YSL12 (717 aa).

Residues 1 to 56 (MASHANASGGGGDEEMVEASTLRHRHGAGKDANGVGTERQLAAAAAEGEEEGPSSV) form a disordered region. A run of 14 helical transmembrane segments spans residues 76–96 (AFVV…KLNL), 99–119 (GIIP…VRLW), 144–164 (CVVA…LFGM), 186–206 (IGWM…ALVP), 248–268 (LGKF…YTAG), 306–326 (IVNV…WPLI), 351–371 (VFIS…KVLI), 422–442 (VAFG…PQIF), 450–470 (ILVA…GAGL), 482–502 (LAIF…LVGL), 536–556 (FVSQ…VFWL), 593–613 (LPKH…AINL), 636–656 (FYIG…LFVW), and 671–691 (VASG…ILAL).

The protein belongs to the YSL (TC 2.A.67.2) family. As to expression, expressed in root cortex and stele.

Its subcellular location is the membrane. May be involved in the transport of nicotianamine-chelated metals. The polypeptide is Probable metal-nicotianamine transporter YSL12 (YSL12) (Oryza sativa subsp. japonica (Rice)).